Consider the following 317-residue polypeptide: Melanocyte-stimulating hormone receptor (317 aa).

The Extracellular portion of the chain corresponds to 1–37 (MPALGSQRRLLGSLNCTPPATLPFTLAPNRTGPQCLE). Asn-29 is a glycosylation site (N-linked (GlcNAc...) asparagine). The helical transmembrane segment at 38–63 (VSIPDGLFLSLGLVSLVENVLVVAAI) threads the bilayer. Residues 64 to 72 (AKNRNLHSP) are Cytoplasmic-facing. The helical transmembrane segment at 73 to 93 (MYYFICCLAVSDLLVSVSNVL) threads the bilayer. Over 94-118 (ETAVMLLLEAGVLATQAAVVQQLDN) the chain is Extracellular. The chain crosses the membrane as a helical span at residues 119-140 (VIDVLICGSMVSSLCFLGAIAV). Residues 141–163 (DRYISIFYALRYHSVVTLPRAWR) are Cytoplasmic-facing. The helical transmembrane segment at 164–183 (IIAAIWVASILTSLLFITYY) threads the bilayer. Topologically, residues 184-191 (NHKVILLC) are extracellular. Residues 192 to 211 (LVGLFIAMLALMAVLYVHML) traverse the membrane as a helical segment. Residues 212–240 (ARACQHARGIARLQKRQRPIHQGFGLKGA) are Cytoplasmic-facing. Residues 241 to 266 (ATLTILLGVFFLCWGPFFLHLSLIVL) form a helical membrane-spanning segment. At 267 to 279 (CPQHPTCGCIFKN) the chain is on the extracellular side. A helical membrane pass occupies residues 280-300 (FNLFLALIICNAIVDPLIYAF). Residues 301 to 317 (RSQELRKTLQEVLQCSW) are Cytoplasmic-facing. Cys-315 carries the S-palmitoyl cysteine lipid modification.

It belongs to the G-protein coupled receptor 1 family. Interacts with MGRN1, but does not undergo MGRN1-mediated ubiquitination; this interaction competes with GNAS-binding and thus inhibits agonist-induced cAMP production. Interacts with OPN3; the interaction results in a decrease in MC1R-mediated cAMP signaling and ultimately a decrease in melanin production in melanocytes. In terms of tissue distribution, highly expressed in the testis.

It localises to the cell membrane. Its function is as follows. Receptor for MSH (alpha, beta) and ACTH. Does not seem to be active with gamma-MSH. The activity of this receptor is mediated by G proteins which activate adenylate cyclase. Mediates melanogenesis, the production of eumelanin (black/brown) and phaeomelanin (red/yellow), via regulation of cAMP signaling in melanocytes. In Bos taurus (Bovine), this protein is Melanocyte-stimulating hormone receptor (MC1R).